We begin with the raw amino-acid sequence, 884 residues long: Translation initiation factor IF-2 (884 aa).

Positions 93 to 288 (VNTPEAEQAK…KGKRKPSTLQ (196 aa)) are disordered. Residues 99-209 (EQAKAEEQAQ…KMAAENEGKW (111 aa)) are compositionally biased toward basic and acidic residues. The segment covering 216 to 229 (QTESADYHVTTSQH) has biased composition (polar residues). Residues 231-246 (RAAEDENDAKVEGDRR) are compositionally biased toward basic and acidic residues. The segment covering 247–261 (SRTRGGKATKQKKGN) has biased composition (basic residues). The span at 262 to 275 (KLSESKADREEARA) shows a compositional bias: basic and acidic residues. The region spanning 383–552 (HRAPVVTIMG…LLQAEVLELK (170 aa)) is the tr-type G domain. Residues 392–399 (GHVDHGKT) are G1. 392–399 (GHVDHGKT) serves as a coordination point for GTP. Residues 417-421 (GITQH) are G2. A G3 region spans residues 438 to 441 (DTPG). Residues 438–442 (DTPGH) and 492–495 (NKID) each bind GTP. Residues 492–495 (NKID) form a G4 region. Residues 528 to 530 (SAK) are G5.

The protein belongs to the TRAFAC class translation factor GTPase superfamily. Classic translation factor GTPase family. IF-2 subfamily.

The protein localises to the cytoplasm. In terms of biological role, one of the essential components for the initiation of protein synthesis. Protects formylmethionyl-tRNA from spontaneous hydrolysis and promotes its binding to the 30S ribosomal subunits. Also involved in the hydrolysis of GTP during the formation of the 70S ribosomal complex. The polypeptide is Translation initiation factor IF-2 (Yersinia pestis bv. Antiqua (strain Antiqua)).